The sequence spans 324 residues: Aspartate carbamoyltransferase catalytic subunit (324 aa).

Residues R71 and T72 each coordinate carbamoyl phosphate. An L-aspartate-binding site is contributed by K99. Carbamoyl phosphate contacts are provided by R121, H151, and Q154. L-aspartate-binding residues include R184 and R239. The carbamoyl phosphate site is built by G280 and P281.

This sequence belongs to the aspartate/ornithine carbamoyltransferase superfamily. ATCase family. As to quaternary structure, heterododecamer (2C3:3R2) of six catalytic PyrB chains organized as two trimers (C3), and six regulatory PyrI chains organized as three dimers (R2).

It catalyses the reaction carbamoyl phosphate + L-aspartate = N-carbamoyl-L-aspartate + phosphate + H(+). It participates in pyrimidine metabolism; UMP biosynthesis via de novo pathway; (S)-dihydroorotate from bicarbonate: step 2/3. In terms of biological role, catalyzes the condensation of carbamoyl phosphate and aspartate to form carbamoyl aspartate and inorganic phosphate, the committed step in the de novo pyrimidine nucleotide biosynthesis pathway. In Cupriavidus necator (strain ATCC 17699 / DSM 428 / KCTC 22496 / NCIMB 10442 / H16 / Stanier 337) (Ralstonia eutropha), this protein is Aspartate carbamoyltransferase catalytic subunit.